We begin with the raw amino-acid sequence, 644 residues long: Biosynthetic arginine decarboxylase (644 aa).

Lys113 carries the N6-(pyridoxal phosphate)lysine modification. 293–303 provides a ligand contact to substrate; sequence FDVGGGLGVDY.

The protein belongs to the Orn/Lys/Arg decarboxylase class-II family. SpeA subfamily. Mg(2+) serves as cofactor. It depends on pyridoxal 5'-phosphate as a cofactor.

It catalyses the reaction L-arginine + H(+) = agmatine + CO2. Catalyzes the biosynthesis of agmatine from arginine. The protein is Biosynthetic arginine decarboxylase of Pasteurella multocida (strain Pm70).